The following is an 81-amino-acid chain: Putative truncated GMC-type inactive oxidoreductase R833 (81 aa).

The protein belongs to the GMC oxidoreductase family.

This Acanthamoeba polyphaga mimivirus (APMV) protein is Putative truncated GMC-type inactive oxidoreductase R833.